The following is a 599-amino-acid chain: DNA primase (599 aa).

The segment at 38–62 (CPFHDEKTPSFTVSEDKQICHCFGC) adopts a CHC2-type zinc-finger fold. In terms of domain architecture, Toprim spans 260-341 (DEIVLLEGFM…NVFVIQLPSG (82 aa)). Glutamate 266, aspartate 310, and aspartate 312 together coordinate Mg(2+).

The protein belongs to the DnaG primase family. In terms of assembly, monomer. Interacts with DnaB. The cofactor is Zn(2+). Mg(2+) is required as a cofactor.

The enzyme catalyses ssDNA + n NTP = ssDNA/pppN(pN)n-1 hybrid + (n-1) diphosphate.. Its function is as follows. RNA polymerase that catalyzes the synthesis of short RNA molecules used as primers for DNA polymerase during DNA replication. This is DNA primase from Staphylococcus aureus (strain MRSA252).